A 282-amino-acid chain; its full sequence is NADPH-dependent 7-cyano-7-deazaguanine reductase (282 aa).

Residue 88 to 90 (IES) coordinates substrate. 90–91 (SK) contributes to the NADPH binding site. Cys-189 acts as the Thioimide intermediate in catalysis. Asp-196 acts as the Proton donor in catalysis. 228–229 (HE) contacts substrate. 257-258 (RG) is an NADPH binding site.

This sequence belongs to the GTP cyclohydrolase I family. QueF type 2 subfamily. In terms of assembly, homodimer.

The protein resides in the cytoplasm. It carries out the reaction 7-aminomethyl-7-carbaguanine + 2 NADP(+) = 7-cyano-7-deazaguanine + 2 NADPH + 3 H(+). It participates in tRNA modification; tRNA-queuosine biosynthesis. Catalyzes the NADPH-dependent reduction of 7-cyano-7-deazaguanine (preQ0) to 7-aminomethyl-7-deazaguanine (preQ1). This Photorhabdus laumondii subsp. laumondii (strain DSM 15139 / CIP 105565 / TT01) (Photorhabdus luminescens subsp. laumondii) protein is NADPH-dependent 7-cyano-7-deazaguanine reductase.